Here is a 540-residue protein sequence, read N- to C-terminus: Phosphoenolpyruvate carboxykinase (ATP) (540 aa).

R65 serves as a coordination point for substrate. Position 87 is an N6-acetyllysine (K87). Residues Y207 and K213 each coordinate substrate. Residues K213, H232, and 248–256 (GLSGTGKTT) each bind ATP. Mn(2+) is bound by residues K213 and H232. D269 is a Mn(2+) binding site. Residues E297, R333, 449–450 (RI), and T455 each bind ATP. R333 lines the substrate pocket. Residue K523 is modified to N6-acetyllysine.

The protein belongs to the phosphoenolpyruvate carboxykinase (ATP) family. As to quaternary structure, monomer. Requires Mn(2+) as cofactor.

It is found in the cytoplasm. It catalyses the reaction oxaloacetate + ATP = phosphoenolpyruvate + ADP + CO2. Its pathway is carbohydrate biosynthesis; gluconeogenesis. Its function is as follows. Involved in the gluconeogenesis. Catalyzes the conversion of oxaloacetate (OAA) to phosphoenolpyruvate (PEP) through direct phosphoryl transfer between the nucleoside triphosphate and OAA. This is Phosphoenolpyruvate carboxykinase (ATP) from Escherichia coli O127:H6 (strain E2348/69 / EPEC).